Here is a 239-residue protein sequence, read N- to C-terminus: Ribosomal RNA small subunit methyltransferase G (239 aa).

Residues Gly-78, Phe-83, 129–130, and Arg-148 each bind S-adenosyl-L-methionine; that span reads AE.

Belongs to the methyltransferase superfamily. RNA methyltransferase RsmG family.

It localises to the cytoplasm. Specifically methylates the N7 position of a guanine in 16S rRNA. The chain is Ribosomal RNA small subunit methyltransferase G from Clostridium botulinum (strain Kyoto / Type A2).